We begin with the raw amino-acid sequence, 64 residues long: KKDGYPVEGDNCAFACFGYDNAYCDKLCKDKKADDGYCVWSPDCYCYGLPEHILKEPTKTSGRC.

The 63-residue stretch at 2-64 (KDGYPVEGDN…KEPTKTSGRC (63 aa)) folds into the LCN-type CS-alpha/beta domain. Disulfide bonds link Cys-12–Cys-64, Cys-16–Cys-38, Cys-24–Cys-44, and Cys-28–Cys-46.

It belongs to the long (4 C-C) scorpion toxin superfamily. Sodium channel inhibitor family. Alpha subfamily. As to expression, expressed by the venom gland.

It is found in the secreted. Functionally, alpha toxins bind voltage-independently at site-3 of sodium channels (Nav) and inhibit the inactivation of the activated channels, thereby blocking neuronal transmission. By extending the depolarized period it indirectly affects beta-cell voltage-dependent potassium channels, thus increasing potassium permeability. This Tityus serrulatus (Brazilian scorpion) protein is Alpha-toxin Ts5.